A 473-amino-acid chain; its full sequence is Asparagine--tRNA ligase (473 aa).

The protein belongs to the class-II aminoacyl-tRNA synthetase family. In terms of assembly, homodimer.

It localises to the cytoplasm. The catalysed reaction is tRNA(Asn) + L-asparagine + ATP = L-asparaginyl-tRNA(Asn) + AMP + diphosphate + H(+). The sequence is that of Asparagine--tRNA ligase from Treponema denticola (strain ATCC 35405 / DSM 14222 / CIP 103919 / JCM 8153 / KCTC 15104).